A 190-amino-acid polypeptide reads, in one-letter code: Protein OPG209 (190 aa).

Belongs to the orthopoxvirus OPG209 protein family.

The chain is Protein OPG209 (OPG209) from Bos taurus (Bovine).